We begin with the raw amino-acid sequence, 454 residues long: Bifunctional protein GlmU (454 aa).

The interval 1–226 (MALNVVILAA…AIEVEGANNR (226 aa)) is pyrophosphorylase. UDP-N-acetyl-alpha-D-glucosamine is bound by residues 8–11 (LAAG), lysine 22, glutamine 73, 78–79 (GT), 100–102 (YGD), glycine 137, glutamate 151, asparagine 166, and asparagine 224. Aspartate 102 contributes to the Mg(2+) binding site. Asparagine 224 lines the Mg(2+) pocket. Residues 227–247 (VQLAQLERAYQARAAEKLMLE) form a linker region. Residues 248–454 (GANLRDPARI…GWTRPVKQKK (207 aa)) are N-acetyltransferase. Arginine 330 and lysine 348 together coordinate UDP-N-acetyl-alpha-D-glucosamine. Histidine 360 functions as the Proton acceptor in the catalytic mechanism. The UDP-N-acetyl-alpha-D-glucosamine site is built by tyrosine 363 and asparagine 374. Acetyl-CoA contacts are provided by residues alanine 377, 383 to 384 (NY), serine 402, alanine 420, and arginine 437.

In the N-terminal section; belongs to the N-acetylglucosamine-1-phosphate uridyltransferase family. This sequence in the C-terminal section; belongs to the transferase hexapeptide repeat family. In terms of assembly, homotrimer. Mg(2+) is required as a cofactor.

It is found in the cytoplasm. The enzyme catalyses alpha-D-glucosamine 1-phosphate + acetyl-CoA = N-acetyl-alpha-D-glucosamine 1-phosphate + CoA + H(+). It catalyses the reaction N-acetyl-alpha-D-glucosamine 1-phosphate + UTP + H(+) = UDP-N-acetyl-alpha-D-glucosamine + diphosphate. It participates in nucleotide-sugar biosynthesis; UDP-N-acetyl-alpha-D-glucosamine biosynthesis; N-acetyl-alpha-D-glucosamine 1-phosphate from alpha-D-glucosamine 6-phosphate (route II): step 2/2. Its pathway is nucleotide-sugar biosynthesis; UDP-N-acetyl-alpha-D-glucosamine biosynthesis; UDP-N-acetyl-alpha-D-glucosamine from N-acetyl-alpha-D-glucosamine 1-phosphate: step 1/1. The protein operates within bacterial outer membrane biogenesis; LPS lipid A biosynthesis. Catalyzes the last two sequential reactions in the de novo biosynthetic pathway for UDP-N-acetylglucosamine (UDP-GlcNAc). The C-terminal domain catalyzes the transfer of acetyl group from acetyl coenzyme A to glucosamine-1-phosphate (GlcN-1-P) to produce N-acetylglucosamine-1-phosphate (GlcNAc-1-P), which is converted into UDP-GlcNAc by the transfer of uridine 5-monophosphate (from uridine 5-triphosphate), a reaction catalyzed by the N-terminal domain. This Shewanella loihica (strain ATCC BAA-1088 / PV-4) protein is Bifunctional protein GlmU.